Reading from the N-terminus, the 121-residue chain is Large ribosomal subunit protein eL18 (121 aa).

The protein belongs to the eukaryotic ribosomal protein eL18 family.

The polypeptide is Large ribosomal subunit protein eL18 (Methanothermobacter thermautotrophicus (strain ATCC 29096 / DSM 1053 / JCM 10044 / NBRC 100330 / Delta H) (Methanobacterium thermoautotrophicum)).